The sequence spans 91 residues: Bombyxin B-1 homolog (91 aa).

The N-terminal stretch at 1 to 19 (MKVSMFVVIVLCMVAASSA) is a signal peptide. Cystine bridges form between cysteine 27–cysteine 78, cysteine 39–cysteine 91, and cysteine 77–cysteine 82. The propeptide at 49-69 (SGAQYARYGWQSPESREGARG) is c peptide like.

Belongs to the insulin family. As to quaternary structure, heterodimer of a B chain and an A chain linked by two disulfide bonds.

It localises to the secreted. Functionally, brain peptide responsible for activation of prothoracic glands to produce ecdysone in insects. The protein is Bombyxin B-1 homolog (SBXB1) of Samia cynthia (Ailanthus silkmoth).